Here is a 158-residue protein sequence, read N- to C-terminus: uncharacterized protein (158 aa).

This sequence belongs to the mimivirus L223/L227/L812 family.

This is an uncharacterized protein from Acanthamoeba polyphaga mimivirus (APMV).